We begin with the raw amino-acid sequence, 54 residues long: UPF0391 membrane protein Mfla_0947/Mfla_1091 (54 aa).

A run of 2 helical transmembrane segments spans residues 6 to 26 (VIFFVIALIAAFFGFSGIAAG) and 30 to 50 (IAKILFFVFLIITIVSLVAGI).

Belongs to the UPF0391 family.

Its subcellular location is the cell membrane. The protein is UPF0391 membrane protein Mfla_0947/Mfla_1091 of Methylobacillus flagellatus (strain ATCC 51484 / DSM 6875 / VKM B-1610 / KT).